Consider the following 120-residue polypeptide: uncharacterized protein (120 aa).

This sequence to M.jannaschii MJ0361.

This is an uncharacterized protein from Methanocaldococcus jannaschii (strain ATCC 43067 / DSM 2661 / JAL-1 / JCM 10045 / NBRC 100440) (Methanococcus jannaschii).